Consider the following 141-residue polypeptide: Lutropin subunit beta (141 aa).

The first 20 residues, 1-20 (MEMLQGLLLWLLLSVAGVWA), serve as a signal peptide directing secretion. Ser-21 bears the Blocked amino end (Ser) mark. Disulfide bonds link Cys-29-Cys-77, Cys-43-Cys-92, Cys-46-Cys-130, Cys-54-Cys-108, Cys-58-Cys-110, and Cys-113-Cys-120. N-linked (GlcNAc...) asparagine glycosylation is present at Asn-33.

This sequence belongs to the glycoprotein hormones subunit beta family. As to quaternary structure, heterodimer of a common alpha chain and a unique beta chain which confers biological specificity to thyrotropin, lutropin, follitropin and gonadotropin.

It is found in the secreted. Promotes spermatogenesis and ovulation by stimulating the testes and ovaries to synthesize steroids. The protein is Lutropin subunit beta (LHB) of Sus scrofa (Pig).